We begin with the raw amino-acid sequence, 95 residues long: uncharacterized protein (95 aa).

Positions 1-17 (MTSSLVIYIFLWSRLIC) are cleaved as a signal peptide.

This is an uncharacterized protein from Saccharomyces cerevisiae (strain ATCC 204508 / S288c) (Baker's yeast).